The following is a 179-amino-acid chain: ATP-dependent protease subunit HslV (179 aa).

Thr7 is a catalytic residue. The Na(+) site is built by Ala163, Cys166, and Thr169.

The protein belongs to the peptidase T1B family. HslV subfamily. As to quaternary structure, a double ring-shaped homohexamer of HslV is capped on each side by a ring-shaped HslU homohexamer. The assembly of the HslU/HslV complex is dependent on binding of ATP.

The protein resides in the cytoplasm. The enzyme catalyses ATP-dependent cleavage of peptide bonds with broad specificity.. With respect to regulation, allosterically activated by HslU binding. Its function is as follows. Protease subunit of a proteasome-like degradation complex believed to be a general protein degrading machinery. This Amoebophilus asiaticus (strain 5a2) protein is ATP-dependent protease subunit HslV.